The primary structure comprises 116 residues: Phosphoribosyl-AMP cyclohydrolase (116 aa).

Asp85 contributes to the Mg(2+) binding site. Residue Cys86 participates in Zn(2+) binding. The Mg(2+) site is built by Asp87 and Asp89. Residues Cys102 and Cys109 each contribute to the Zn(2+) site.

Belongs to the PRA-CH family. Homodimer. Requires Mg(2+) as cofactor. It depends on Zn(2+) as a cofactor.

Its subcellular location is the cytoplasm. The enzyme catalyses 1-(5-phospho-beta-D-ribosyl)-5'-AMP + H2O = 1-(5-phospho-beta-D-ribosyl)-5-[(5-phospho-beta-D-ribosylamino)methylideneamino]imidazole-4-carboxamide. Its pathway is amino-acid biosynthesis; L-histidine biosynthesis; L-histidine from 5-phospho-alpha-D-ribose 1-diphosphate: step 3/9. Catalyzes the hydrolysis of the adenine ring of phosphoribosyl-AMP. This is Phosphoribosyl-AMP cyclohydrolase from Corynebacterium diphtheriae (strain ATCC 700971 / NCTC 13129 / Biotype gravis).